Here is a 295-residue protein sequence, read N- to C-terminus: Bifunctional protein FolD (295 aa).

Residues 165–167, S190, and I231 contribute to the NADP(+) site; that span reads GRS.

It belongs to the tetrahydrofolate dehydrogenase/cyclohydrolase family. Homodimer.

The catalysed reaction is (6R)-5,10-methylene-5,6,7,8-tetrahydrofolate + NADP(+) = (6R)-5,10-methenyltetrahydrofolate + NADPH. It carries out the reaction (6R)-5,10-methenyltetrahydrofolate + H2O = (6R)-10-formyltetrahydrofolate + H(+). The protein operates within one-carbon metabolism; tetrahydrofolate interconversion. Catalyzes the oxidation of 5,10-methylenetetrahydrofolate to 5,10-methenyltetrahydrofolate and then the hydrolysis of 5,10-methenyltetrahydrofolate to 10-formyltetrahydrofolate. This is Bifunctional protein FolD from Nitrosomonas eutropha (strain DSM 101675 / C91 / Nm57).